Here is a 182-residue protein sequence, read N- to C-terminus: Ribosome maturation factor RimP (182 aa).

This sequence belongs to the RimP family.

The protein localises to the cytoplasm. In terms of biological role, required for maturation of 30S ribosomal subunits. The sequence is that of Ribosome maturation factor RimP from Corynebacterium efficiens (strain DSM 44549 / YS-314 / AJ 12310 / JCM 11189 / NBRC 100395).